The primary structure comprises 146 residues: Transcriptional regulator MraZ (146 aa).

SpoVT-AbrB domains lie at 5–47 and 76–119; these read EYYH…TITD and SIQV…AKEK.

It belongs to the MraZ family. In terms of assembly, forms oligomers.

It localises to the cytoplasm. The protein localises to the nucleoid. This chain is Transcriptional regulator MraZ, found in Dictyoglomus thermophilum (strain ATCC 35947 / DSM 3960 / H-6-12).